A 76-amino-acid polypeptide reads, in one-letter code: Large ribosomal subunit protein bL31 (76 aa).

The Zn(2+) site is built by Cys16, Cys18, Cys38, and Cys41.

The protein belongs to the bacterial ribosomal protein bL31 family. Type A subfamily. In terms of assembly, part of the 50S ribosomal subunit. Zn(2+) serves as cofactor.

In terms of biological role, binds the 23S rRNA. This is Large ribosomal subunit protein bL31 from Nocardia farcinica (strain IFM 10152).